The primary structure comprises 183 residues: Crossover junction endodeoxyribonuclease RuvC (183 aa).

Active-site residues include D7, E66, and D138. D7, E66, and D138 together coordinate Mg(2+).

Belongs to the RuvC family. Homodimer which binds Holliday junction (HJ) DNA. The HJ becomes 2-fold symmetrical on binding to RuvC with unstacked arms; it has a different conformation from HJ DNA in complex with RuvA. In the full resolvosome a probable DNA-RuvA(4)-RuvB(12)-RuvC(2) complex forms which resolves the HJ. Mg(2+) is required as a cofactor.

The protein resides in the cytoplasm. It carries out the reaction Endonucleolytic cleavage at a junction such as a reciprocal single-stranded crossover between two homologous DNA duplexes (Holliday junction).. Functionally, the RuvA-RuvB-RuvC complex processes Holliday junction (HJ) DNA during genetic recombination and DNA repair. Endonuclease that resolves HJ intermediates. Cleaves cruciform DNA by making single-stranded nicks across the HJ at symmetrical positions within the homologous arms, yielding a 5'-phosphate and a 3'-hydroxyl group; requires a central core of homology in the junction. The consensus cleavage sequence is 5'-(A/T)TT(C/G)-3'. Cleavage occurs on the 3'-side of the TT dinucleotide at the point of strand exchange. HJ branch migration catalyzed by RuvA-RuvB allows RuvC to scan DNA until it finds its consensus sequence, where it cleaves and resolves the cruciform DNA. In Burkholderia ambifaria (strain MC40-6), this protein is Crossover junction endodeoxyribonuclease RuvC.